Reading from the N-terminus, the 72-residue chain is uncharacterized protein (72 aa).

The segment at 52-72 (KGGRQRDEAVGVEELCKQHKE) is disordered. Residues 55–72 (RQRDEAVGVEELCKQHKE) are compositionally biased toward basic and acidic residues.

It belongs to the YiiE family.

This is an uncharacterized protein from Escherichia coli O6:H1 (strain CFT073 / ATCC 700928 / UPEC).